Consider the following 269-residue polypeptide: Aquaporin-1 (269 aa).

Topologically, residues 1–11 (MASEFKKKLFW) are cytoplasmic. Residues 12 to 29 (RAVVAEFLAMTLFVFISI) traverse the membrane as a helical segment. At 30 to 46 (GSALGFKYPVGNNQTAV) the chain is on the extracellular side. N-linked (GlcNAc...) asparagine glycosylation is present at Asn-42. Residues 47 to 65 (QDNVKVSLAFGLSIATLAQ) traverse the membrane as a helical segment. Topologically, residues 66–68 (SVG) are cytoplasmic. The stretch at 69 to 82 (HISGAHLNPAVTLG) is an intramembrane region. Positions 76 to 78 (NPA) match the NPA 1 motif. Over 83–90 (LLLSCQIS) the chain is Cytoplasmic. Residues 91–109 (IFRALMYIIAQCVGAIVAT) traverse the membrane as a helical segment. At 110-133 (AILSGITSSLPGNSLGRNDLADGV) the chain is on the extracellular side. Residues 134 to 153 (NSGQGLGIEIIGTLQLVLCV) traverse the membrane as a helical segment. The Cytoplasmic segment spans residues 154-163 (LATTDRRRRD). A helical membrane pass occupies residues 164 to 181 (LGGSAPLAIGLSVALGHL). At 182–186 (LAIDY) the chain is on the extracellular side. Residues 187-199 (TGCGINPARSFGS) lie within the membrane without spanning it. Residues 192–194 (NPA) carry the NPA 2 motif. Topologically, residues 200–206 (AVITHNF) are extracellular. Residue Asn-205 is glycosylated (N-linked (GlcNAc...) asparagine). A helical transmembrane segment spans residues 207-224 (SNHWIFWVGPFIGGALAV). Topologically, residues 225–269 (LIYDFILAPRSSDFTDRVKVWTSGQVEEYDLDADDINSRVEMKPK) are cytoplasmic. At Ser-247 the chain carries Phosphoserine. A Phosphotyrosine modification is found at Tyr-253. The residue at position 262 (Ser-262) is a Phosphoserine.

It belongs to the MIP/aquaporin (TC 1.A.8) family. In terms of assembly, homotetramer; each monomer provides an independent water pore. Component of the ankyrin-1 complex in the erythrocyte, composed of ANK1, RHCE, RHAG, SLC4A1, EPB42, GYPA, GYPB and AQP1. Interacts with EPHB2; involved in endolymph production in the inner ear. Identified in a complex with STOM. Interacts (via the N-terminal) with ANK1 (via ANK 1-5 repeats). Interacts (via the C-terminal) with EPB42.

It is found in the cell membrane. It catalyses the reaction H2O(in) = H2O(out). The catalysed reaction is nitric oxide(out) = nitric oxide(in). The enzyme catalyses CO2(out) = CO2(in). It carries out the reaction glycerol(in) = glycerol(out). It catalyses the reaction H2O2(out) = H2O2(in). The catalysed reaction is K(+)(in) = K(+)(out). The enzyme catalyses Na(+)(in) = Na(+)(out). Forms a water channel that facilitates the transport of water across cell membranes, playing a crucial role in water homeostasis in various tissues. Could also be permeable to small solutes including hydrogen peroxide, glycerol and gases such as amonnia (NH3), nitric oxide (NO) and carbon dioxide (CO2). Recruited to the ankyrin-1 complex, a multiprotein complex of the erythrocyte membrane, it could be part of a CO2 metabolon, linking facilitated diffusion of CO2 across the membrane, anion exchange of Cl(-)/HCO3(-) and interconversion of dissolved CO2 and carbonic acid in the cytosol. In vitro, it shows non-selective gated cation channel activity and may be permeable to cations like K(+) and Na(+) in vivo. The protein is Aquaporin-1 of Pongo abelii (Sumatran orangutan).